We begin with the raw amino-acid sequence, 128 residues long: Sirohydrochlorin cobaltochelatase (128 aa).

The active-site Proton acceptor is His9. His9 contacts Co(2+). Substrate is bound by residues Lys43 and 68–73; that span reads FATGTH. Co(2+) is bound at residue His73.

Belongs to the CbiX family. CbiXS subfamily. Homotetramer; dimer of dimers.

It catalyses the reaction Co-sirohydrochlorin + 2 H(+) = sirohydrochlorin + Co(2+). It functions in the pathway cofactor biosynthesis; adenosylcobalamin biosynthesis; cob(II)yrinate a,c-diamide from sirohydrochlorin (anaerobic route): step 1/10. Functionally, catalyzes the insertion of Co(2+) into sirohydrochlorin as part of the anaerobic pathway to cobalamin biosynthesis. The polypeptide is Sirohydrochlorin cobaltochelatase (Saccharolobus islandicus (strain Y.N.15.51 / Yellowstone #2) (Sulfolobus islandicus)).